The following is a 282-amino-acid chain: Putative polysaccharide deacetylase YheN (282 aa).

A helical membrane pass occupies residues 15–35 (LAFKFASLAVLCVLLLLMVIL). A NodB homology domain is found at 85-271 (KTVYLTFDDG…KLKEKGYSFG (187 aa)).

The protein belongs to the polysaccharide deacetylase family.

The protein localises to the cell membrane. In Bacillus subtilis (strain 168), this protein is Putative polysaccharide deacetylase YheN (yheN).